The primary structure comprises 372 residues: N-methyl-L-tryptophan oxidase (372 aa).

4–34 serves as a coordination point for FAD; the sequence is DLIIIGSGSVGAAAGYYATRAGLKVLMTDAH. Cys-307 bears the S-8alpha-FAD cysteine mark.

It belongs to the MSOX/MTOX family. MTOX subfamily. As to quaternary structure, monomer. The cofactor is FAD.

The enzyme catalyses N(alpha)-methyl-L-tryptophan + O2 + H2O = L-tryptophan + formaldehyde + H2O2. Its function is as follows. Catalyzes the oxidative demethylation of N-methyl-L-tryptophan. The chain is N-methyl-L-tryptophan oxidase from Salmonella dublin (strain CT_02021853).